Here is a 235-residue protein sequence, read N- to C-terminus: MGRAFEYRRASKEARWDKMSKLFPKLAKAIQVAAKEGGTDPDMNPKLRSAIATAKANNMPKDNIDAAIKRASGKDSADIKNIHYEGKAAHGALVIVECMSDNPTRTVANVKAIFSKNGGEVLQNGSLGFMFTRKAVFHLEKFAGDLEELELDLIDAGLEELEQNEEELVISGDYTAFGELSSAIEAKGLVLKKAGLEYIPNNPVSFSEEQLSDIEKLLDKLEDDDDVQAVYTNID.

Belongs to the TACO1 family.

The protein localises to the cytoplasm. The protein is Probable transcriptional regulatory protein Cj1172c of Campylobacter jejuni subsp. jejuni serotype O:2 (strain ATCC 700819 / NCTC 11168).